The following is a 191-amino-acid chain: tRNA-specific adenosine deaminase 2 (191 aa).

Residues 20–145 form the CMP/dCMP-type deaminase domain; sequence EETEKWMEQA…SVLDIASADL (126 aa). His-71 is a binding site for Zn(2+). The active-site Proton donor is the Glu-73. 2 residues coordinate Zn(2+): Cys-107 and Cys-110.

This sequence belongs to the cytidine and deoxycytidylate deaminase family. ADAT2 subfamily. Requires Zn(2+) as cofactor.

It carries out the reaction adenosine(34) in tRNA + H2O + H(+) = inosine(34) in tRNA + NH4(+). In terms of biological role, probably participates in deamination of adenosine-34 to inosine in many tRNAs. The protein is tRNA-specific adenosine deaminase 2 (DEADC1) of Bos taurus (Bovine).